Reading from the N-terminus, the 353-residue chain is Phosphoribosylformylglycinamidine cyclo-ligase (353 aa).

This sequence belongs to the AIR synthase family.

It is found in the cytoplasm. It catalyses the reaction 2-formamido-N(1)-(5-O-phospho-beta-D-ribosyl)acetamidine + ATP = 5-amino-1-(5-phospho-beta-D-ribosyl)imidazole + ADP + phosphate + H(+). Its pathway is purine metabolism; IMP biosynthesis via de novo pathway; 5-amino-1-(5-phospho-D-ribosyl)imidazole from N(2)-formyl-N(1)-(5-phospho-D-ribosyl)glycinamide: step 2/2. This chain is Phosphoribosylformylglycinamidine cyclo-ligase, found in Pseudomonas aeruginosa (strain ATCC 15692 / DSM 22644 / CIP 104116 / JCM 14847 / LMG 12228 / 1C / PRS 101 / PAO1).